A 204-amino-acid polypeptide reads, in one-letter code: Inositol diphosphatase DSP5 (204 aa).

The 150-residue stretch at 19–168 folds into the Tyrosine-protein phosphatase domain; it reads NFSMVEDEIY…FDVLRLKQCL (150 aa). Positions 75–87 are WPD loop important for active site topology; the sequence is FGIEGKTDPPTPM. Cys-111 serves as the catalytic Phosphocysteine intermediate.

The protein belongs to the protein-tyrosine phosphatase family. Atypical dual-specificity phosphatase Siw14-like subfamily. As to expression, highly expressed in flowers. Expressed at low levels in roots, leaves, stems and siliques.

The enzyme catalyses 5-diphospho-1D-myo-inositol 1,2,3,4,6-pentakisphosphate + H2O = 1D-myo-inositol hexakisphosphate + phosphate + H(+). It carries out the reaction 1,5-bis(diphospho)-1D-myo-inositol 2,3,4,6-tetrakisphosphate + H2O = 1-diphospho-1D-myo-inositol 2,3,4,5,6-pentakisphosphate + phosphate + 2 H(+). It catalyses the reaction 3,5-bis(diphospho)-1D-myo-inositol 1,2,4,6-tetrakisphosphate + H2O = 3-diphospho-1D-myo-inositol 1,2,4,5,6-pentakisphosphate + phosphate + 2 H(+). The catalysed reaction is 6-diphospho-1D-myo-inositol pentakisphosphate + H2O = 1D-myo-inositol hexakisphosphate + phosphate + H(+). Functionally, cleaves the beta-phosphate at the 5-position of soluble inositol pyrophosphates. Has highest activity on 5-diphosphoinositol 1,2,3,4,6-pentakisphosphate (5-InsP(7)). Possesses low phosphotyrosine phosphatase activity in vitro. Dephosphorylates the phosphoinositides PI(3,5)P2. Hydrolyzes O-methylfluorescein phosphate in vitro. The protein is Inositol diphosphatase DSP5 of Arabidopsis thaliana (Mouse-ear cress).